Consider the following 261-residue polypeptide: Transcription antitermination protein NusB (261 aa).

The interval 168–261 (ARVEDQPSDD…DLHKKDTTDD (94 aa)) is disordered. Over residues 217-228 (VDTTSGNASDPE) the composition is skewed to polar residues. A compositionally biased stretch (basic and acidic residues) spans 242–261 (PTSKDHELATDLHKKDTTDD).

The protein belongs to the NusB family.

Involved in transcription antitermination. Required for transcription of ribosomal RNA (rRNA) genes. Binds specifically to the boxA antiterminator sequence of the ribosomal RNA (rrn) operons. The protein is Transcription antitermination protein NusB of Cutibacterium acnes (strain DSM 16379 / KPA171202) (Propionibacterium acnes).